The primary structure comprises 336 residues: MVIEKIWFHRHPLGYLLWPLLWPFSVLFGVISRSRRKAYQTGDKPSYRAPLPVVVVGNITAGGNGKTPVVVWLVETLQNLGYRPGVVSRGYGAKAPSYPLVVNEQTPAQHCGDEPKLIFQRTKAPVAVDPVRSQAVKALLEHGVNVIVTDDGLQHYALQRDIEIAVVDGVRRFGNQELIPLGPLREPVSRLDEVDFIITNGGVAKANEIAMRLQPTDAVNLKTGERCAVSKLTRLCAMAGIGHPSRFFNTLRELNADLVHCQGFADHQAFDAAQLNQLAQQGAHLIMTEKDAVKCAEFAQPNWWYLPVSAQFAPEAEQRIVDKIKEVMEPYGSPSA.

60–67 is a binding site for ATP; the sequence is TAGGNGKT.

It belongs to the LpxK family.

The enzyme catalyses a lipid A disaccharide + ATP = a lipid IVA + ADP + H(+). It participates in glycolipid biosynthesis; lipid IV(A) biosynthesis; lipid IV(A) from (3R)-3-hydroxytetradecanoyl-[acyl-carrier-protein] and UDP-N-acetyl-alpha-D-glucosamine: step 6/6. Transfers the gamma-phosphate of ATP to the 4'-position of a tetraacyldisaccharide 1-phosphate intermediate (termed DS-1-P) to form tetraacyldisaccharide 1,4'-bis-phosphate (lipid IVA). This chain is Tetraacyldisaccharide 4'-kinase, found in Vibrio cholerae serotype O1 (strain ATCC 39315 / El Tor Inaba N16961).